The sequence spans 348 residues: Sec-independent protein translocase protein TatC (348 aa).

6 helical membrane passes run 7–27, 162–182, 192–212, 244–264, 278–298, and 299–319; these read LCLT…MDIL, VVIS…PGLL, CMAV…FIVL, MILM…FVKL, YAIV…DVAT, and MMLM…LAWM.

Belongs to the TatC family. Forms a complex with TatA.

It localises to the cell membrane. Part of the twin-arginine translocation (Tat) system that transports large folded proteins containing a characteristic twin-arginine motif in their signal peptide across membranes. The protein is Sec-independent protein translocase protein TatC of Akkermansia muciniphila (strain ATCC BAA-835 / DSM 22959 / JCM 33894 / BCRC 81048 / CCUG 64013 / CIP 107961 / Muc).